We begin with the raw amino-acid sequence, 506 residues long: Maturase K (506 aa).

This sequence belongs to the intron maturase 2 family. MatK subfamily.

It is found in the plastid. The protein localises to the chloroplast. Usually encoded in the trnK tRNA gene intron. Probably assists in splicing its own and other chloroplast group II introns. The polypeptide is Maturase K (Crataegus monogyna (Hawthorn)).